A 206-amino-acid chain; its full sequence is Ribosomal RNA large subunit methyltransferase E (206 aa).

S-adenosyl-L-methionine-binding residues include Gly-60, Trp-62, Asp-80, Asp-96, and Asp-121. Lys-161 serves as the catalytic Proton acceptor.

It belongs to the class I-like SAM-binding methyltransferase superfamily. RNA methyltransferase RlmE family.

It is found in the cytoplasm. It catalyses the reaction uridine(2552) in 23S rRNA + S-adenosyl-L-methionine = 2'-O-methyluridine(2552) in 23S rRNA + S-adenosyl-L-homocysteine + H(+). Specifically methylates the uridine in position 2552 of 23S rRNA at the 2'-O position of the ribose in the fully assembled 50S ribosomal subunit. The chain is Ribosomal RNA large subunit methyltransferase E from Legionella pneumophila (strain Lens).